We begin with the raw amino-acid sequence, 292 residues long: Protease HtpX (292 aa).

Transmembrane regions (helical) follow at residues I4 to V24 and I32 to I52. H139 is a binding site for Zn(2+). Residue E140 is part of the active site. Zn(2+) is bound at residue H143. 2 consecutive transmembrane segments (helical) span residues I150–I170 and F193–I213. E222 contributes to the Zn(2+) binding site.

Belongs to the peptidase M48B family. Requires Zn(2+) as cofactor.

The protein resides in the cell membrane. In Buchnera aphidicola subsp. Schizaphis graminum (strain Sg), this protein is Protease HtpX.